Here is a 420-residue protein sequence, read N- to C-terminus: Synaptosomal-associated protein 47 (420 aa).

2 t-SNARE coiled-coil homology domains span residues 110 to 172 (AEAA…LTEL) and 357 to 419 (TSEP…MKKL). The tract at residues 338–357 (ATHCEPSSGSQEGRPLQLQT) is disordered. Polar residues predominate over residues 342-357 (EPSSGSQEGRPLQLQT).

This sequence belongs to the SVAP1 family. In terms of assembly, forms a complex containing SNAP47, VAMP2 and STX1A. Associates with the BLOC-1 complex. Interacts with BLOC1S6.

It is found in the endomembrane system. It localises to the cytoplasm. The protein localises to the perinuclear region. May play a role in intracellular membrane fusion. The chain is Synaptosomal-associated protein 47 (SNAP47) from Bos taurus (Bovine).